Here is a 152-residue protein sequence, read N- to C-terminus: Transcriptional regulator MraZ (152 aa).

2 consecutive SpoVT-AbrB domains span residues 5-52 (VNQL…PLPE) and 81-124 (AQEL…DESL).

Belongs to the MraZ family. Forms oligomers.

It is found in the cytoplasm. Its subcellular location is the nucleoid. In Halorhodospira halophila (strain DSM 244 / SL1) (Ectothiorhodospira halophila (strain DSM 244 / SL1)), this protein is Transcriptional regulator MraZ.